Reading from the N-terminus, the 142-residue chain is Large ribosomal subunit protein uL11 (142 aa).

Belongs to the universal ribosomal protein uL11 family. In terms of assembly, part of the ribosomal stalk of the 50S ribosomal subunit. Interacts with L10 and the large rRNA to form the base of the stalk. L10 forms an elongated spine to which L12 dimers bind in a sequential fashion forming a multimeric L10(L12)X complex. In terms of processing, one or more lysine residues are methylated.

Its function is as follows. Forms part of the ribosomal stalk which helps the ribosome interact with GTP-bound translation factors. This Shigella boydii serotype 4 (strain Sb227) protein is Large ribosomal subunit protein uL11.